We begin with the raw amino-acid sequence, 126 residues long: Large ribosomal subunit protein mL52 (126 aa).

The transit peptide at methionine 1–alanine 28 directs the protein to the mitochondrion.

Belongs to the mitochondrion-specific ribosomal protein mL52 family. As to quaternary structure, component of the mitochondrial ribosome large subunit (39S) which comprises a 16S rRNA and about 50 distinct proteins.

Its subcellular location is the mitochondrion. The polypeptide is Large ribosomal subunit protein mL52 (mRpL52) (Drosophila melanogaster (Fruit fly)).